The sequence spans 537 residues: Frizzled-4 (537 aa).

The first 36 residues, 1–36 (MAWPGTGPSSRGAPGGVGLRLGLLLQFLLLLRPTLG), serve as a signal peptide directing secretion. Residues 37–212 (FGDEEERRCD…KCGYDAGLYS (176 aa)) are Extracellular-facing. The FZ domain maps to 40 to 161 (EEERRCDPIR…NDHNHMCMEG (122 aa)). 8 disulfides stabilise this stretch: Cys45/Cys106, Cys53/Cys99, Cys90/Cys128, Cys117/Cys158, Cys121/Cys145, Cys181/Cys200, Cys204/Cys282, and Cys302/Cys377. Asn59 is a glycosylation site (N-linked (GlcNAc...) asparagine). An N-linked (GlcNAc...) asparagine glycan is attached at Asn144. Residues 213 to 243 (RSAKEFTDIWMAVWASLCFISTTFTVLTFLI) form a helical membrane-spanning segment. Topologically, residues 244 to 249 (DSSRFS) are cytoplasmic. A helical membrane pass occupies residues 250–275 (YPERPIIFLSMCYNIYSIAYIVRLTV). At 276–299 (GRERISCDFEEAAEPVLIQEGLKN) the chain is on the extracellular side. A helical transmembrane segment spans residues 300-333 (TGCAIIFLLMYFFGMASSIWWVILTLTWFLAAGL). The Cytoplasmic segment spans residues 334-336 (KWG). The chain crosses the membrane as a helical span at residues 337-365 (HEAIEMHSSYFHIAAWAIPAVKTIVILIM). The Extracellular portion of the chain corresponds to 366-383 (RLVDADELTGLCYVGNQN). A helical transmembrane segment spans residues 384-410 (LDALTGFVVAPLFTYLVIGTLFIAAGL). The Cytoplasmic segment spans residues 411 to 431 (VALFKIRSNLQKDGTKTDKLE). Residues 432–460 (RLMVKIGVFSVLYTVPATCVIACYFYEIS) form a helical membrane-spanning segment. Residues 461–473 (NWALFRYSADDSN) are Extracellular-facing. Residues 474–495 (MAVEMLKIFMSLLVGITSGMWI) form a helical membrane-spanning segment. The Cytoplasmic portion of the chain corresponds to 496–537 (WSAKTLHTWQKCSNRLVNSGKVKREKRGNGWVKPGKGNETVV). The short motif at 499 to 504 (KTLHTW) is the Lys-Thr-X-X-X-Trp motif, mediates interaction with the PDZ domain of Dvl family members element. The PDZ-binding motif lies at 535-537 (TVV).

Belongs to the G-protein coupled receptor Fz/Smo family. In terms of assembly, interacts with MAGI3 and NDP. Component of a complex, at least composed of TSPAN12, FZD4 and norrin (NDP). Interacts (via FZ domain) with TSKU; TSKU competes with WNT2B for binding to FZD4, inhibiting Wnt signaling and repressing peripheral eye development. Interacts with glypican GPC3. Ubiquitinated by ZNRF3, leading to its degradation by the proteasome. As to expression, expressed in chondrocytes.

It is found in the cell membrane. In terms of biological role, receptor for Wnt proteins. Most frizzled receptors are coupled to the beta-catenin (CTNNB1) canonical signaling pathway, which leads to the activation of disheveled proteins, inhibition of GSK-3 kinase, nuclear accumulation of beta-catenin (CTNNB1) and activation of Wnt target genes. Plays a critical role in retinal vascularization by acting as a receptor for Wnt proteins and norrin (NDP). In retina, it can be activated by Wnt protein-binding and also by Wnt-independent signaling via binding of norrin (NDP), promoting in both cases beta-catenin (CTNNB1) accumulation and stimulation of LEF/TCF-mediated transcriptional programs. A second signaling pathway involving PKC and calcium fluxes has been seen for some family members, but it is not yet clear if it represents a distinct pathway or if it can be integrated in the canonical pathway, as PKC seems to be required for Wnt-mediated inactivation of GSK-3 kinase. Both pathways seem to involve interactions with G-proteins. May be involved in transduction and intercellular transmission of polarity information during tissue morphogenesis and/or in differentiated tissues. Activation by Wnt5A stimulates PKC activity via a G-protein-dependent mechanism. This chain is Frizzled-4 (Fzd4), found in Mus musculus (Mouse).